Here is a 173-residue protein sequence, read N- to C-terminus: Large ribosomal subunit protein uL10 (173 aa).

The protein belongs to the universal ribosomal protein uL10 family. In terms of assembly, part of the ribosomal stalk of the 50S ribosomal subunit. The N-terminus interacts with L11 and the large rRNA to form the base of the stalk. The C-terminus forms an elongated spine to which L12 dimers bind in a sequential fashion forming a multimeric L10(L12)X complex.

In terms of biological role, forms part of the ribosomal stalk, playing a central role in the interaction of the ribosome with GTP-bound translation factors. In Chlorobaculum parvum (strain DSM 263 / NCIMB 8327) (Chlorobium vibrioforme subsp. thiosulfatophilum), this protein is Large ribosomal subunit protein uL10.